Here is a 155-residue protein sequence, read N- to C-terminus: Putative pre-16S rRNA nuclease (155 aa).

The protein belongs to the YqgF nuclease family.

The protein localises to the cytoplasm. In terms of biological role, could be a nuclease involved in processing of the 5'-end of pre-16S rRNA. This chain is Putative pre-16S rRNA nuclease, found in Xanthomonas axonopodis pv. citri (strain 306).